The primary structure comprises 345 residues: UDP-N-acetylenolpyruvoylglucosamine reductase (345 aa).

The region spanning 59-254 (VGGPAACLAR…RKATQPLGRP (196 aa)) is the FAD-binding PCMH-type domain. Residue Arg-209 is part of the active site. The active-site Proton donor is the Cys-258. Glu-328 is an active-site residue.

It belongs to the MurB family. The cofactor is FAD.

The protein localises to the cytoplasm. The catalysed reaction is UDP-N-acetyl-alpha-D-muramate + NADP(+) = UDP-N-acetyl-3-O-(1-carboxyvinyl)-alpha-D-glucosamine + NADPH + H(+). It functions in the pathway cell wall biogenesis; peptidoglycan biosynthesis. Functionally, cell wall formation. The sequence is that of UDP-N-acetylenolpyruvoylglucosamine reductase from Syntrophobacter fumaroxidans (strain DSM 10017 / MPOB).